A 160-amino-acid chain; its full sequence is Large ribosomal subunit protein bL19 (160 aa).

Belongs to the bacterial ribosomal protein bL19 family.

Its function is as follows. This protein is located at the 30S-50S ribosomal subunit interface and may play a role in the structure and function of the aminoacyl-tRNA binding site. In Prochlorococcus marinus subsp. pastoris (strain CCMP1986 / NIES-2087 / MED4), this protein is Large ribosomal subunit protein bL19.